A 152-amino-acid chain; its full sequence is SsrA-binding protein (152 aa).

This sequence belongs to the SmpB family.

Its subcellular location is the cytoplasm. Functionally, required for rescue of stalled ribosomes mediated by trans-translation. Binds to transfer-messenger RNA (tmRNA), required for stable association of tmRNA with ribosomes. tmRNA and SmpB together mimic tRNA shape, replacing the anticodon stem-loop with SmpB. tmRNA is encoded by the ssrA gene; the 2 termini fold to resemble tRNA(Ala) and it encodes a 'tag peptide', a short internal open reading frame. During trans-translation Ala-aminoacylated tmRNA acts like a tRNA, entering the A-site of stalled ribosomes, displacing the stalled mRNA. The ribosome then switches to translate the ORF on the tmRNA; the nascent peptide is terminated with the 'tag peptide' encoded by the tmRNA and targeted for degradation. The ribosome is freed to recommence translation, which seems to be the essential function of trans-translation. This Rickettsia typhi (strain ATCC VR-144 / Wilmington) protein is SsrA-binding protein.